We begin with the raw amino-acid sequence, 399 residues long: Stearoyl-[acyl-carrier-protein] 9-desaturase, seed specific, chloroplastic (399 aa).

The transit peptide at 1–34 (MALKFNPLVSQPYKLASSARPPVSTFRSPKFLCL) directs the protein to the chloroplast. Positions 141, 179, 182, 232, 265, and 268 each coordinate Fe cation.

Belongs to the fatty acid desaturase type 2 family. Homodimer. Fe(2+) is required as a cofactor. In terms of tissue distribution, developing seeds.

Its subcellular location is the plastid. It localises to the chloroplast. The enzyme catalyses octadecanoyl-[ACP] + 2 reduced [2Fe-2S]-[ferredoxin] + O2 + 2 H(+) = (9Z)-octadecenoyl-[ACP] + 2 oxidized [2Fe-2S]-[ferredoxin] + 2 H2O. It participates in lipid metabolism; fatty acid metabolism. Converts stearoyl-ACP to oleoyl-ACP by introduction of a cis double bond between carbons Delta(9) and Delta(10) of the acyl chain. In Brassica napus (Rape), this protein is Stearoyl-[acyl-carrier-protein] 9-desaturase, seed specific, chloroplastic.